Consider the following 217-residue polypeptide: 3-demethoxyubiquinol 3-hydroxylase (217 aa).

E66, E96, H99, E148, E180, and H183 together coordinate Fe cation.

It belongs to the COQ7 family. Fe cation serves as cofactor.

Its subcellular location is the cell membrane. The enzyme catalyses a 5-methoxy-2-methyl-3-(all-trans-polyprenyl)benzene-1,4-diol + AH2 + O2 = a 3-demethylubiquinol + A + H2O. Its pathway is cofactor biosynthesis; ubiquinone biosynthesis. In terms of biological role, catalyzes the hydroxylation of 2-nonaprenyl-3-methyl-6-methoxy-1,4-benzoquinol during ubiquinone biosynthesis. This Ralstonia pickettii (strain 12J) protein is 3-demethoxyubiquinol 3-hydroxylase.